Reading from the N-terminus, the 692-residue chain is Methionine--tRNA ligase (692 aa).

Residues 12–22 carry the 'HIGH' region motif; that stretch reads PYANGSFHIGH. Positions 143, 146, 156, and 159 each coordinate Zn(2+). Positions 341–345 match the 'KMSKS' region motif; that stretch reads KMSKS. ATP is bound at residue Lys-344. One can recognise a tRNA-binding domain in the interval 586–692; it reads DFAKIDLRIA…PGAQPGMRVR (107 aa).

This sequence belongs to the class-I aminoacyl-tRNA synthetase family. MetG type 1 subfamily. In terms of assembly, homodimer. The cofactor is Zn(2+).

The protein resides in the cytoplasm. The catalysed reaction is tRNA(Met) + L-methionine + ATP = L-methionyl-tRNA(Met) + AMP + diphosphate. Its function is as follows. Is required not only for elongation of protein synthesis but also for the initiation of all mRNA translation through initiator tRNA(fMet) aminoacylation. The protein is Methionine--tRNA ligase of Bordetella pertussis (strain Tohama I / ATCC BAA-589 / NCTC 13251).